Here is a 474-residue protein sequence, read N- to C-terminus: Kynureninase 2 (474 aa).

Residues leucine 144, threonine 145, 172–175, aspartate 258, histidine 261, and tyrosine 283 contribute to the pyridoxal 5'-phosphate site; that span reads FPSD. Position 284 is an N6-(pyridoxal phosphate)lysine (lysine 284). 2 residues coordinate pyridoxal 5'-phosphate: tryptophan 323 and threonine 351.

This sequence belongs to the kynureninase family. In terms of assembly, homodimer. The cofactor is pyridoxal 5'-phosphate.

Its subcellular location is the cytoplasm. The catalysed reaction is L-kynurenine + H2O = anthranilate + L-alanine + H(+). The enzyme catalyses 3-hydroxy-L-kynurenine + H2O = 3-hydroxyanthranilate + L-alanine + H(+). It participates in amino-acid degradation; L-kynurenine degradation; L-alanine and anthranilate from L-kynurenine: step 1/1. It functions in the pathway cofactor biosynthesis; NAD(+) biosynthesis; quinolinate from L-kynurenine: step 2/3. Its function is as follows. Catalyzes the cleavage of L-kynurenine (L-Kyn) and L-3-hydroxykynurenine (L-3OHKyn) into anthranilic acid (AA) and 3-hydroxyanthranilic acid (3-OHAA), respectively. The chain is Kynureninase 2 (bna5-2) from Emericella nidulans (strain FGSC A4 / ATCC 38163 / CBS 112.46 / NRRL 194 / M139) (Aspergillus nidulans).